We begin with the raw amino-acid sequence, 185 residues long: Large ribosomal subunit protein bL25 (185 aa).

Belongs to the bacterial ribosomal protein bL25 family. CTC subfamily. In terms of assembly, part of the 50S ribosomal subunit; part of the 5S rRNA/L5/L18/L25 subcomplex. Contacts the 5S rRNA. Binds to the 5S rRNA independently of L5 and L18.

This is one of the proteins that binds to the 5S RNA in the ribosome where it forms part of the central protuberance. The chain is Large ribosomal subunit protein bL25 from Chlamydia caviae (strain ATCC VR-813 / DSM 19441 / 03DC25 / GPIC) (Chlamydophila caviae).